Reading from the N-terminus, the 206-residue chain is Repetitive proline-rich cell wall protein 1 (206 aa).

The N-terminal stretch at 1 to 22 (MASSNFLVLLLFALFAIPQGLA) is a signal peptide. 33 consecutive repeat copies span residues 32-36 (PPVYK), 37-41 (PPVEK), 42-46 (PPVYK), 47-51 (PPVEK), 52-56 (PPVYK), 57-61 (PPVEK), 62-66 (PPVYK), 67-71 (PPVYK), 72-76 (PPVYK), 77-81 (PPVVK), 82-86 (PPVYK), 87-91 (PPVYK), 92-96 (PPVYK), 97-101 (PPVYK), 102-106 (PPVEK), 107-111 (PPVYK), 112-116 (PPVYK), 117-121 (PPVVK), 122-126 (PPVYK), 127-131 (PPVYK), 132-136 (PPVEK), 137-141 (PPVYK), 142-146 (PPVVK), 147-151 (PPVYK), 152-156 (PPVYK), 157-161 (PPVVK), 162-166 (PPVYK), 167-171 (PPVYK), 172-176 (PPVYK), 177-181 (PPVEK), 182-186 (PPVYK), 187-191 (PPVYK), and 192-196 (PPVEK). A 34 X 5 AA approximate tandem repeats of P-P-V-[EVY]-K region spans residues 32-201 (PPVYKPPVEK…PPVEKPPVYG (170 aa)). The segment at 51-84 (KPPVYKPPVEKPPVYKPPVYKPPVYKPPVVKPPV) is disordered. Residues 132-206 (PPVEKPPVYK…PPVYGPPHHP (75 aa)) are disordered. Residues 197–201 (PPVYG) form a 34; approximate repeat.

Belongs to the plant proline-rich protein superfamily. ENOD12 family. As to expression, expressed in hypocotyls, roots and mature root nodules.

It localises to the secreted. Its subcellular location is the cell wall. Its function is as follows. This is a developmentally regulated putative cell wall protein. The polypeptide is Repetitive proline-rich cell wall protein 1 (PRP1) (Medicago truncatula (Barrel medic)).